Reading from the N-terminus, the 106-residue chain is Integration host factor subunit alpha (106 aa).

Belongs to the bacterial histone-like protein family. In terms of assembly, heterodimer of an alpha and a beta chain.

In terms of biological role, this protein is one of the two subunits of integration host factor, a specific DNA-binding protein that functions in genetic recombination as well as in transcriptional and translational control. In Methylobacterium radiotolerans (strain ATCC 27329 / DSM 1819 / JCM 2831 / NBRC 15690 / NCIMB 10815 / 0-1), this protein is Integration host factor subunit alpha.